A 217-amino-acid chain; its full sequence is MSIGILGKKLGMSQLFDDKGNAVPVTLIEAGPCRVTQLKTTTLDGYSAVQIGYGLSKDKHINKPEKGHLLKSGEELLKHLKEYRVEETTSYEIGNQITVKNFEVGQKVDISGKSMGRGFAGYQKRHGFSRGPMSHGSKNHRAPGSTGAGTTPGRIYPGKRMAGRYGGKQITTKGLLVLKIDDQKNLLVIKGSVPGKPGSIVNIKPNNVVGKKGGQKS.

Residues 127 to 162 (GFSRGPMSHGSKNHRAPGSTGAGTTPGRIYPGKRMA) form a disordered region. The segment covering 142-153 (APGSTGAGTTPG) has biased composition (low complexity).

This sequence belongs to the universal ribosomal protein uL3 family. As to quaternary structure, part of the 50S ribosomal subunit. Forms a cluster with proteins L14 and L19.

Its function is as follows. One of the primary rRNA binding proteins, it binds directly near the 3'-end of the 23S rRNA, where it nucleates assembly of the 50S subunit. This is Large ribosomal subunit protein uL3 from Prochlorococcus marinus (strain MIT 9312).